The primary structure comprises 133 residues: MARDFSRAQRVSQEMQKEIAIILQREVKDPRIGMATVSGVEISRDLAYAKVFVTFLNLSAGEESDEEMVENGLKALNEAAGFIRSLLGKAMRLRVVPELTFAYDNSLVEGMRMSNLVSNVVKDDEKRRHKEEE.

The protein belongs to the RbfA family. In terms of assembly, monomer. Binds 30S ribosomal subunits, but not 50S ribosomal subunits or 70S ribosomes.

The protein localises to the cytoplasm. Its function is as follows. One of several proteins that assist in the late maturation steps of the functional core of the 30S ribosomal subunit. Associates with free 30S ribosomal subunits (but not with 30S subunits that are part of 70S ribosomes or polysomes). Required for efficient processing of 16S rRNA. May interact with the 5'-terminal helix region of 16S rRNA. This Proteus mirabilis (strain HI4320) protein is Ribosome-binding factor A.